Here is a 519-residue protein sequence, read N- to C-terminus: Serine/threonine-protein kinase RIO3 (519 aa).

5 positions are modified to phosphoserine: Ser-8, Ser-112, Ser-125, Ser-127, and Ser-128. The tract at residues Phe-122–Gly-159 is disordered. Residues Asp-124–Trp-134 show a composition bias toward acidic residues. One can recognise a Protein kinase domain in the interval Glu-251–Asp-519. Residues Ile-257–Val-265 and Lys-290 contribute to the ATP site. The active-site Proton acceptor is Asp-406. At Ser-512 the chain carries Phosphoserine.

The protein belongs to the protein kinase superfamily. RIO-type Ser/Thr kinase family. In terms of assembly, interacts with CASP10. Interacts with IRF3; RIOK3 probably mediates the interaction of TBK1 with IRF3. Associated with 40S pre-ribosomal particles. Mg(2+) is required as a cofactor. Autophosphorylated (in vitro).

It localises to the cytoplasm. The catalysed reaction is L-seryl-[protein] + ATP = O-phospho-L-seryl-[protein] + ADP + H(+). It carries out the reaction L-threonyl-[protein] + ATP = O-phospho-L-threonyl-[protein] + ADP + H(+). Functionally, involved in regulation of type I interferon (IFN)-dependent immune response which plays a critical role in the innate immune response against DNA and RNA viruses. May act as an adapter protein essential for the recruitment of TBK1 to IRF3. Phosphorylates IFIH1 on 'Ser-828' interfering with IFIH1 filament assembly on long dsRNA and resulting in attenuated IFIH1-signaling. Can inhibit CASP10 isoform 7-mediated activation of the NF-kappaB signaling pathway. May play a role in the biogenesis of the 40S ribosomal subunit. Involved in the processing of 21S pre-rRNA to the mature 18S rRNA. The protein is Serine/threonine-protein kinase RIO3 (Riok3) of Mus musculus (Mouse).